Reading from the N-terminus, the 681-residue chain is Calpain-C (681 aa).

Residues Leu-18 to Asp-331 form the Calpain catalytic domain. A domain III region spans residues Thr-332–Ser-481. Positions Cys-482 to Cys-514 are linker. A domain IV region spans residues Gln-515–Cys-681. The EF-hand domain occupies Ala-552–Trp-587. The Ca(2+) site is built by Asp-565, Ser-567, Ser-569, and Arg-571.

The protein belongs to the peptidase C2 family. Localized to the salivary glands in the larva.

It localises to the cytoplasm. Its function is as follows. Not known; does not seem to have protease activity. The sequence is that of Calpain-C from Drosophila melanogaster (Fruit fly).